The sequence spans 552 residues: Protoheme IX farnesyltransferase, mitochondrial (552 aa).

The tract at residues Ala118 to Ser185 is disordered. Residues Glu150–Pro168 show a composition bias toward low complexity. 8 consecutive transmembrane segments (helical) span residues Leu215 to Phe235, Leu245 to Leu267, Ala296 to Val316, Pro318 to Leu338, Thr346 to Gly366, Ala387 to Leu407, Val441 to Val461, and Ala487 to Leu507.

It belongs to the UbiA prenyltransferase family.

The protein localises to the mitochondrion membrane. The enzyme catalyses heme b + (2E,6E)-farnesyl diphosphate + H2O = Fe(II)-heme o + diphosphate. Functionally, converts protoheme IX and farnesyl diphosphate to heme O. In Pyricularia oryzae (strain 70-15 / ATCC MYA-4617 / FGSC 8958) (Rice blast fungus), this protein is Protoheme IX farnesyltransferase, mitochondrial (COX10).